Here is a 706-residue protein sequence, read N- to C-terminus: Polyribonucleotide nucleotidyltransferase (706 aa).

2 residues coordinate Mg(2+): Asp487 and Asp493. Residues 554-613 form the KH domain; that stretch reads PRIHTMKISSDKIKDVIGKGGAVIRALCEETGTTIEIEDDGTIKIAATEGAAAKEAIRRI. Positions 623-691 constitute an S1 motif domain; that stretch reads GRIYQGKVAR…RQGRVRLSMK (69 aa).

This sequence belongs to the polyribonucleotide nucleotidyltransferase family. Component of the RNA degradosome, which is a multiprotein complex involved in RNA processing and mRNA degradation. The cofactor is Mg(2+).

The protein resides in the cytoplasm. The enzyme catalyses RNA(n+1) + phosphate = RNA(n) + a ribonucleoside 5'-diphosphate. Involved in mRNA degradation. Catalyzes the phosphorolysis of single-stranded polyribonucleotides processively in the 3'- to 5'-direction. The polypeptide is Polyribonucleotide nucleotidyltransferase (Vibrio atlanticus (strain LGP32) (Vibrio splendidus (strain Mel32))).